The chain runs to 327 residues: Metaxin-1 homolog (327 aa).

Residues 281–301 form a helical membrane-spanning segment; sequence IVAGVGAVLAMGAFAAWRGIY.

The protein belongs to the metaxin family. Associates with the mitochondrial contact site and cristae organizing system (MICOS) complex (also known as MINOS or MitOS complex).

Its subcellular location is the mitochondrion outer membrane. Functionally, involved in transport of proteins into the mitochondrion. Essential for embryonic development. The polypeptide is Metaxin-1 homolog (Drosophila melanogaster (Fruit fly)).